The sequence spans 626 residues: Phosphomethylpyrimidine synthase (626 aa).

Positions 92 to 106 are enriched in basic and acidic residues; sequence AREVKPEDNGLKGPD. The tract at residues 92–117 is disordered; that stretch reads AREVKPEDNGLKGPDRSAGVPPFPNV. Substrate-binding positions include N219, M248, Y277, H313, 333–335, 374–377, and E413; these read SRG and DGLR. A Zn(2+)-binding site is contributed by H417. Y440 lines the substrate pocket. H481 contributes to the Zn(2+) binding site. Residues C561, C564, and C569 each contribute to the [4Fe-4S] cluster site.

This sequence belongs to the ThiC family. Homodimer. It depends on [4Fe-4S] cluster as a cofactor.

The catalysed reaction is 5-amino-1-(5-phospho-beta-D-ribosyl)imidazole + S-adenosyl-L-methionine = 4-amino-2-methyl-5-(phosphooxymethyl)pyrimidine + CO + 5'-deoxyadenosine + formate + L-methionine + 3 H(+). It functions in the pathway cofactor biosynthesis; thiamine diphosphate biosynthesis. In terms of biological role, catalyzes the synthesis of the hydroxymethylpyrimidine phosphate (HMP-P) moiety of thiamine from aminoimidazole ribotide (AIR) in a radical S-adenosyl-L-methionine (SAM)-dependent reaction. The chain is Phosphomethylpyrimidine synthase from Novosphingobium aromaticivorans (strain ATCC 700278 / DSM 12444 / CCUG 56034 / CIP 105152 / NBRC 16084 / F199).